Consider the following 796-residue polypeptide: MSEAIKSKTVDYSSDEYLKRVDEYWRAANYISVGQLYLLNNPLLREPLKATDVKVHPIGHWGTIAGQNFIYAHLNRAINKYGLNMFYIEGPGHGGQVMVSNSYLDGTYTETYPKITQDKAGMKRLFKQFSFPGGVASHADPKTPGSIHEGGELGYSILHGAGAVLDNPGLIAATVVGDGESETGPLATSWQVNKFLNPITDGTVLPILNLNGFKISNPTVLSRESHEELEDYFKGLGWDPHFVEGTDPAKMHKIMAEELDKVIEEIHAIRKNAKDNNDESRPKWPMIVFRAPKGWTGPKSWDGEPIEGSFRAHQIPIPVDRNHMEHADKLVDWLKSYKPEELFDENGTLKPEIAAIIPEGQARMAANPVTNGGKLTKDLITPNIDDYALDNKSHGKEDGSDMTELGKYIRDLIELNKDNKNFRGWGPDETLSNKLGAAFEDTKRQWMEPIHEPNDALLAPQGRIIDSMLSEHMDEGMLEAYNLTGRYGFFASYESFLRVVDSMLTQHFKWLRNSHEETPWRADVPSLNVIASSTAFQQDHNGYSHQDPGIISHLAEKKTEYVRAYLPGDANTLIATFDKAIQSKQLINLIIASKHPRPQWFTMDEAKRLVRDGLGVVDWASTDHGEEPDVVFATAGSEPTTESLAAVSILHARFPEMKIRFINVVDLLKLKKDDPRGLSDAEFDAFFTKDKPVIFAYHAYDDLVKTIFFDRHNHNLHVHGYREEGDITTPFDMRVRNELDRFHLVKAALLATPAYAEKGAHVIQEMNSILDKHHDYIRAEGTDIPEVENWKWTALK.

This sequence belongs to the XFP family. Requires thiamine diphosphate as cofactor.

In Lactiplantibacillus plantarum (strain ATCC BAA-793 / NCIMB 8826 / WCFS1) (Lactobacillus plantarum), this protein is Probable phosphoketolase 2.